A 146-amino-acid polypeptide reads, in one-letter code: UPF0178 protein Lin1493 (146 aa).

This sequence belongs to the UPF0178 family.

This Listeria innocua serovar 6a (strain ATCC BAA-680 / CLIP 11262) protein is UPF0178 protein Lin1493.